Here is a 321-residue protein sequence, read N- to C-terminus: Glucokinase (321 aa).

9–14 (ADIGGT) is a binding site for ATP.

It belongs to the bacterial glucokinase family.

Its subcellular location is the cytoplasm. The catalysed reaction is D-glucose + ATP = D-glucose 6-phosphate + ADP + H(+). This Saccharophagus degradans (strain 2-40 / ATCC 43961 / DSM 17024) protein is Glucokinase.